A 485-amino-acid polypeptide reads, in one-letter code: Glutamyl-tRNA(Gln) amidotransferase subunit A (485 aa).

Active-site charge relay system residues include lysine 78 and serine 153. Serine 177 acts as the Acyl-ester intermediate in catalysis.

The protein belongs to the amidase family. GatA subfamily. As to quaternary structure, heterotrimer of A, B and C subunits.

The catalysed reaction is L-glutamyl-tRNA(Gln) + L-glutamine + ATP + H2O = L-glutaminyl-tRNA(Gln) + L-glutamate + ADP + phosphate + H(+). Functionally, allows the formation of correctly charged Gln-tRNA(Gln) through the transamidation of misacylated Glu-tRNA(Gln) in organisms which lack glutaminyl-tRNA synthetase. The reaction takes place in the presence of glutamine and ATP through an activated gamma-phospho-Glu-tRNA(Gln). This is Glutamyl-tRNA(Gln) amidotransferase subunit A from Trichlorobacter lovleyi (strain ATCC BAA-1151 / DSM 17278 / SZ) (Geobacter lovleyi).